We begin with the raw amino-acid sequence, 102 residues long: Small ribosomal subunit protein uS10 (102 aa).

This sequence belongs to the universal ribosomal protein uS10 family. As to quaternary structure, part of the 30S ribosomal subunit.

Functionally, involved in the binding of tRNA to the ribosomes. This Tropheryma whipplei (strain TW08/27) (Whipple's bacillus) protein is Small ribosomal subunit protein uS10.